Here is a 352-residue protein sequence, read N- to C-terminus: UDP-N-acetylglucosamine--N-acetylmuramyl-(pentapeptide) pyrophosphoryl-undecaprenol N-acetylglucosamine transferase (352 aa).

Residues 11 to 13, N120, R161, S188, and Q286 contribute to the UDP-N-acetyl-alpha-D-glucosamine site; that span reads TGG.

The protein belongs to the glycosyltransferase 28 family. MurG subfamily.

It is found in the cell inner membrane. It catalyses the reaction di-trans,octa-cis-undecaprenyl diphospho-N-acetyl-alpha-D-muramoyl-L-alanyl-D-glutamyl-meso-2,6-diaminopimeloyl-D-alanyl-D-alanine + UDP-N-acetyl-alpha-D-glucosamine = di-trans,octa-cis-undecaprenyl diphospho-[N-acetyl-alpha-D-glucosaminyl-(1-&gt;4)]-N-acetyl-alpha-D-muramoyl-L-alanyl-D-glutamyl-meso-2,6-diaminopimeloyl-D-alanyl-D-alanine + UDP + H(+). Its pathway is cell wall biogenesis; peptidoglycan biosynthesis. Functionally, cell wall formation. Catalyzes the transfer of a GlcNAc subunit on undecaprenyl-pyrophosphoryl-MurNAc-pentapeptide (lipid intermediate I) to form undecaprenyl-pyrophosphoryl-MurNAc-(pentapeptide)GlcNAc (lipid intermediate II). This Prochlorococcus marinus (strain NATL2A) protein is UDP-N-acetylglucosamine--N-acetylmuramyl-(pentapeptide) pyrophosphoryl-undecaprenol N-acetylglucosamine transferase.